The chain runs to 641 residues: SUMO-activating enzyme subunit 2-B (641 aa).

ATP contacts are provided by residues 24 to 29 (GAGGIG), aspartate 48, 56 to 59 (NLNR), lysine 72, 95 to 96 (SI), and 117 to 122 (DNNAAR). Zn(2+)-binding residues include cysteine 158 and cysteine 161. Catalysis depends on cysteine 173, which acts as the Glycyl thioester intermediate. Residues cysteine 439 and cysteine 442 each contribute to the Zn(2+) site. The interval 546 to 641 (GDVPEKGPQK…EEDDDIIALD (96 aa)) is disordered. Residues 548-561 (VPEKGPQKPPEESV) show a composition bias toward basic and acidic residues. Polar residues predominate over residues 562-579 (KNITNGSDDGAQPSTSKA). 2 stretches are compositionally biased toward acidic residues: residues 582 to 594 (QDDV…DEES) and 630 to 641 (PVEEDDDIIALD).

This sequence belongs to the ubiquitin-activating E1 family. In terms of assembly, heterodimer of sae1 and uba2/sae2. The heterodimer corresponds to the two domains that are encoded on a single polypeptide chain in ubiquitin-activating enzyme E1. Interacts with ube2i.

The protein localises to the nucleus. It participates in protein modification; protein sumoylation. The heterodimer acts as an E1 ligase for sumo1, sumo2, and sumo3. It mediates ATP-dependent activation of sumo proteins followed by formation of a thioester bond between a sumo protein and a conserved active site cysteine residue on uba2/sae2. The polypeptide is SUMO-activating enzyme subunit 2-B (uba2-b) (Xenopus laevis (African clawed frog)).